Consider the following 278-residue polypeptide: Large ribosomal subunit protein uL2 (278 aa).

Disordered regions lie at residues 1-58 and 210-278; these read MGIR…GGGH and GRMR…GKKR. Residues 23–33 are compositionally biased toward basic and acidic residues; the sequence is EVTRSEPEKSL. The span at 40-49 shows a compositional bias: low complexity; sequence SGGRNSTGRI. Composition is skewed to basic residues over residues 210 to 220 and 269 to 278; these read GRMRWKGKRPS and VRRRRTGKKR.

It belongs to the universal ribosomal protein uL2 family. In terms of assembly, part of the 50S ribosomal subunit. Forms a bridge to the 30S subunit in the 70S ribosome.

Its function is as follows. One of the primary rRNA binding proteins. Required for association of the 30S and 50S subunits to form the 70S ribosome, for tRNA binding and peptide bond formation. It has been suggested to have peptidyltransferase activity; this is somewhat controversial. Makes several contacts with the 16S rRNA in the 70S ribosome. This Beutenbergia cavernae (strain ATCC BAA-8 / DSM 12333 / CCUG 43141 / JCM 11478 / NBRC 16432 / NCIMB 13614 / HKI 0122) protein is Large ribosomal subunit protein uL2.